We begin with the raw amino-acid sequence, 242 residues long: Ribonuclease PH (242 aa).

Residues R89 and 127–129 (GTR) each bind phosphate.

It belongs to the RNase PH family. In terms of assembly, homohexameric ring arranged as a trimer of dimers.

It carries out the reaction tRNA(n+1) + phosphate = tRNA(n) + a ribonucleoside 5'-diphosphate. Its function is as follows. Phosphorolytic 3'-5' exoribonuclease that plays an important role in tRNA 3'-end maturation. Removes nucleotide residues following the 3'-CCA terminus of tRNAs; can also add nucleotides to the ends of RNA molecules by using nucleoside diphosphates as substrates, but this may not be physiologically important. Probably plays a role in initiation of 16S rRNA degradation (leading to ribosome degradation) during starvation. The chain is Ribonuclease PH from Neisseria meningitidis serogroup B (strain ATCC BAA-335 / MC58).